The chain runs to 476 residues: Bifunctional protein HldE (476 aa).

The interval 1 to 318 is ribokinase; the sequence is MFQYSAEFKQ…ENAIHGRSNT (318 aa). 195 to 198 provides a ligand contact to ATP; the sequence is NMSE. Residue aspartate 264 is part of the active site. The interval 344–476 is cytidylyltransferase; it reads MTNGCFDILH…VISKIQQLKD (133 aa).

This sequence in the N-terminal section; belongs to the carbohydrate kinase PfkB family. The protein in the C-terminal section; belongs to the cytidylyltransferase family. In terms of assembly, homodimer.

It carries out the reaction D-glycero-beta-D-manno-heptose 7-phosphate + ATP = D-glycero-beta-D-manno-heptose 1,7-bisphosphate + ADP + H(+). The enzyme catalyses D-glycero-beta-D-manno-heptose 1-phosphate + ATP + H(+) = ADP-D-glycero-beta-D-manno-heptose + diphosphate. It functions in the pathway nucleotide-sugar biosynthesis; ADP-L-glycero-beta-D-manno-heptose biosynthesis; ADP-L-glycero-beta-D-manno-heptose from D-glycero-beta-D-manno-heptose 7-phosphate: step 1/4. The protein operates within nucleotide-sugar biosynthesis; ADP-L-glycero-beta-D-manno-heptose biosynthesis; ADP-L-glycero-beta-D-manno-heptose from D-glycero-beta-D-manno-heptose 7-phosphate: step 3/4. It participates in bacterial outer membrane biogenesis; LPS core biosynthesis. Functionally, catalyzes the phosphorylation of D-glycero-D-manno-heptose 7-phosphate at the C-1 position to selectively form D-glycero-beta-D-manno-heptose-1,7-bisphosphate. In terms of biological role, catalyzes the ADP transfer from ATP to D-glycero-beta-D-manno-heptose 1-phosphate, yielding ADP-D-glycero-beta-D-manno-heptose. The polypeptide is Bifunctional protein HldE (Pasteurella multocida (strain Pm70)).